The primary structure comprises 533 residues: Large neutral amino acids transporter small subunit 2 (533 aa).

Residues 1 to 33 are disordered; it reads MEKGTRQRNNTAKNHPDRGSDTSPEAEASSGGG. Residues 1–45 lie on the Cytoplasmic side of the membrane; that stretch reads MEKGTRQRNNTAKNHPDRGSDTSPEAEASSGGGGVALKKEIGLVS. Phosphoserine occurs at positions 20, 23, 29, and 30. A helical transmembrane segment spans residues 46–66; that stretch reads ACGIIVGNIIGSGIFVSPKGV. Position 54 (I54) interacts with L-leucine. The Extracellular segment spans residues 67 to 74; that stretch reads LENAGSVG. The chain crosses the membrane as a helical span at residues 75–96; it reads LALIVWIVTGVITAVGALCYAE. Residues 97–117 are Cytoplasmic-facing; sequence LGVTIPKSGGDYSYVKDIFGG. A helical transmembrane segment spans residues 118–150; that stretch reads LAGFLRLWIAVLVIYPTNQAVIALTFSNYVLQP. Residue N135 participates in L-tryptophan binding. The Extracellular portion of the chain corresponds to 151 to 158; it reads LFPTCFPP. Residues 159 to 179 form a helical membrane-spanning segment; that stretch reads ESGLRLLAAICLLLLTWVNCS. Residues 180-182 are Cytoplasmic-facing; sequence SVR. The helical transmembrane segment at 183–211 threads the bilayer; sequence WATRVQDIFTAGKLLALALIIIMGVVQIC. Topologically, residues 212 to 231 are extracellular; the sequence is KGEFFWLEPKNAFENFQEPD. Residues 232–253 traverse the membrane as a helical segment; that stretch reads IGLVALAFLQGSFAYGGWNFLN. Residue G247 participates in L-leucine binding. Over 254–266 the chain is Cytoplasmic; that stretch reads YVTEELVDPYKNL. The helical transmembrane segment at 267–288 threads the bilayer; it reads PRAIFISIPLVTFVYVFANIAY. Over 289-313 the chain is Extracellular; sequence VTAMSPQELLASNAVAVTFGEKLLG. Residues 314-339 form a helical membrane-spanning segment; that stretch reads VMAWIMPISVALSTFGGVNGSLFTSS. Residues 340-365 lie on the Cytoplasmic side of the membrane; the sequence is RLFFAGAREGHLPSVLAMIHVKRCTP. The chain crosses the membrane as a helical span at residues 366-383; that stretch reads IPALLFTCLSTLLMLVTS. The Extracellular portion of the chain corresponds to 384 to 387; the sequence is DMYT. The helical transmembrane segment at 388–409 threads the bilayer; sequence LINYVGFINYLFYGVTVAGQIV. L-tryptophan is bound at residue N396. Over 410–424 the chain is Cytoplasmic; sequence LRWKKPDIPRPIKIS. Transmembrane regions (helical) follow at residues 425–447 and 448–467; these read LLFP…WSEP and VVCG…YFLG. Residues 468–533 lie on the Cytoplasmic side of the membrane; the sequence is VYWQHKPKCF…VKDPDSEEQP (66 aa). Residues 500–533 are disordered; that stretch reads GDSGTEETIDDVEEQHKPIFQPTPVKDPDSEEQP. Over residues 502–512 the composition is skewed to acidic residues; it reads SGTEETIDDVE. S529 carries the post-translational modification Phosphoserine.

It belongs to the amino acid-polyamine-organocation (APC) superfamily. L-type amino acid transporter (LAT) (TC 2.A.3.8) family. Disulfide-linked heterodimer composed of the catalytic light chain subunit SLC7A8 and the heavy chain subunit SLC3A2. SLC3A2 acts as a chaperone for correct plasma membrane trafficking and stabilization of SLC7A8 and modulates the substrate affinity and specificity of SLC7A8. ICAM-1 associates with the heterodimer SLC3A2/SLC7A8; facilitates leucine uptake. Expression is seen in jejunum mucosa and the epithelial cells of the jejunum, ileum and colon, as well as in kidney, placenta, brain, testis and skeletal muscle. Expressed in retina, inner blood-retinal barrier of retina, retinal vascular endothelial cells. Also expressed in the intestinal epithelial cell line IEC-6 and in the retinal capillary endothelial cell line TR-iBRB2.

The protein resides in the cell membrane. Its subcellular location is the basolateral cell membrane. The catalysed reaction is L-dopa(out) + L-phenylalanine(in) = L-dopa(in) + L-phenylalanine(out). The enzyme catalyses 3,3'-diiodo-L-thyronine(out) = 3,3'-diiodo-L-thyronine(in). It catalyses the reaction L-histidine(in) + L-phenylalanine(out) = L-histidine(out) + L-phenylalanine(in). It carries out the reaction L-tryptophan(in) + L-phenylalanine(out) = L-tryptophan(out) + L-phenylalanine(in). The catalysed reaction is L-isoleucine(in) + L-phenylalanine(out) = L-isoleucine(out) + L-phenylalanine(in). The enzyme catalyses L-valine(in) + L-phenylalanine(out) = L-valine(out) + L-phenylalanine(in). It catalyses the reaction L-leucine(in) + L-phenylalanine(out) = L-leucine(out) + L-phenylalanine(in). It carries out the reaction L-glutamine(in) + L-phenylalanine(out) = L-glutamine(out) + L-phenylalanine(in). The catalysed reaction is L-cysteine(in) + L-phenylalanine(out) = L-cysteine(out) + L-phenylalanine(in). The enzyme catalyses L-phenylalanine(out) + L-methionine(in) = L-phenylalanine(in) + L-methionine(out). It catalyses the reaction L-leucine(out) + L-methionine(in) = L-leucine(in) + L-methionine(out). It carries out the reaction L-cysteine(out) + L-methionine(in) = L-cysteine(in) + L-methionine(out). The catalysed reaction is S-methylmercury-L-cysteine(out) + L-methionine(in) = S-methylmercury-L-cysteine(in) + L-methionine(out). The enzyme catalyses S-methylmercury-L-cysteine(in) + L-leucine(out) = S-methylmercury-L-cysteine(out) + L-leucine(in). It catalyses the reaction S-methylmercury-L-cysteine(in) + L-phenylalanine(out) = S-methylmercury-L-cysteine(out) + L-phenylalanine(in). It carries out the reaction L-phenylalanine(out) + L-serine(in) = L-phenylalanine(in) + L-serine(out). The catalysed reaction is L-phenylalanine(out) + glycine(in) = L-phenylalanine(in) + glycine(out). The enzyme catalyses L-phenylalanine(out) + L-alanine(in) = L-phenylalanine(in) + L-alanine(out). It catalyses the reaction 3,3',5-triiodo-L-thyronine(out) = 3,3',5-triiodo-L-thyronine(in). Leucine transport activity is inhibited by 2-amino-bicyclo-(2,2,1)-heptane-2-carboxylate (BCH), glycine, L-isomers of the neutral amino acids and histidine. Its function is as follows. Associates with SLC3A2 to form a functional heterodimeric complex that translocates small and large neutral amino acids with broad specificity and a stoichiometry of 1:1. Functions as amino acid antiporter mediating the influx of extracellular essential amino acids mainly in exchange with the efflux of highly concentrated intracellular amino acids. Has relatively symmetrical selectivities but strongly asymmetrical substrate affinities at both the intracellular and extracellular sides of the transporter. This asymmetry allows SLC7A8 to regulate intracellular amino acid pools (mM concentrations) by exchange with external amino acids (uM concentration range), equilibrating the relative concentrations of different amino acids across the plasma membrane instead of mediating their net uptake. May play an essential role in the reabsorption of neutral amino acids from the epithelial cells to the bloodstream in the kidney. Involved in the uptake of methylmercury (MeHg) when administered as the L-cysteine or D,L-homocysteine complexes, and hence plays a role in metal ion homeostasis and toxicity. Involved in the cellular activity of small molecular weight nitrosothiols, via the stereoselective transport of L-nitrosocysteine (L-CNSO) across the transmembrane. Imports the thyroid hormone diiodothyronine (T2) and to a smaller extent triiodothyronine (T3) but not rT 3 or thyroxine (T4). Mediates the uptake of L-DOPA. May participate in auditory function. This chain is Large neutral amino acids transporter small subunit 2 (Slc7a8), found in Rattus norvegicus (Rat).